The sequence spans 239 residues: Ubiquinone biosynthesis O-methyltransferase (239 aa).

S-adenosyl-L-methionine contacts are provided by Arg44, Gly63, Asp84, and Met128.

This sequence belongs to the methyltransferase superfamily. UbiG/COQ3 family.

It catalyses the reaction a 3-demethylubiquinol + S-adenosyl-L-methionine = a ubiquinol + S-adenosyl-L-homocysteine + H(+). It carries out the reaction a 3-(all-trans-polyprenyl)benzene-1,2-diol + S-adenosyl-L-methionine = a 2-methoxy-6-(all-trans-polyprenyl)phenol + S-adenosyl-L-homocysteine + H(+). It participates in cofactor biosynthesis; ubiquinone biosynthesis. Functionally, O-methyltransferase that catalyzes the 2 O-methylation steps in the ubiquinone biosynthetic pathway. The protein is Ubiquinone biosynthesis O-methyltransferase of Xanthomonas oryzae pv. oryzae (strain MAFF 311018).